Here is a 681-residue protein sequence, read N- to C-terminus: Serine/threonine-protein kinase PAK 6 (681 aa).

4 disordered regions span residues 1-30, 149-169, 200-256, and 268-355; these read MFRK…DPKE, GGTP…PRVL, QSSP…ESSL, and TAAT…PRTW. One can recognise a CRIB domain in the interval 12-25; that stretch reads ISAPQNFQHRVHTS. The segment at 26–406 is linker; that stretch reads FDPKEGKFVG…VVDQGDPRLL (381 aa). Composition is skewed to low complexity over residues 201 to 212 and 268 to 278; these read SSPPGASPPTGT and TAATAPPSSSK. Residues 308–333 are compositionally biased toward polar residues; the sequence is SLPSDQPVGTFSPLTTSDTSSPQKSL. The Protein kinase domain maps to 407-658; it reads LDSYVKIGEG…AQELLDHPFL (252 aa). ATP is bound by residues 413–421 and lysine 436; that span reads IGEGSTGIV. Catalysis depends on aspartate 526, which acts as the Proton acceptor. The residue at position 560 (serine 560) is a Phosphoserine; by autocatalysis.

This sequence belongs to the protein kinase superfamily. STE Ser/Thr protein kinase family. STE20 subfamily. As to quaternary structure, interacts tightly with GTP-bound but not GDP-bound CDC42/p21 and RAC1. Interacts with the androgen receptor AR and the estrogen receptor ESR1. Interacts with IQGAP1 and PPM1B. Autophosphorylated. Phosphorylated by MAP2K6//MAPKK6, leading to PAK6 activation. In terms of tissue distribution, selectively expressed in brain and testis, with lower levels in multiple tissues including prostate and breast.

Its subcellular location is the cytoplasm. It is found in the nucleus. The enzyme catalyses L-seryl-[protein] + ATP = O-phospho-L-seryl-[protein] + ADP + H(+). The catalysed reaction is L-threonyl-[protein] + ATP = O-phospho-L-threonyl-[protein] + ADP + H(+). Serine/threonine protein kinase that plays a role in the regulation of gene transcription. The kinase activity is induced by various effectors including AR or MAP2K6/MAPKK6. Phosphorylates the DNA-binding domain of androgen receptor/AR and thereby inhibits AR-mediated transcription. Also inhibits ESR1-mediated transcription. May play a role in cytoskeleton regulation by interacting with IQGAP1. May protect cells from apoptosis through phosphorylation of BAD. This Homo sapiens (Human) protein is Serine/threonine-protein kinase PAK 6 (PAK6).